Here is a 148-residue protein sequence, read N- to C-terminus: UPF0540 protein At1g62000 (148 aa).

The signal sequence occupies residues 1-21 (MNATKFVVLLVIGILCAIVTA). The span at 123-132 (RANGKVASAS) shows a compositional bias: low complexity. Positions 123-148 (RANGKVASASRVKGSSEKKKGKGKKD) are disordered.

The protein belongs to the UPF0540 family.

In Arabidopsis thaliana (Mouse-ear cress), this protein is UPF0540 protein At1g62000.